Here is a 443-residue protein sequence, read N- to C-terminus: Deoxyguanosinetriphosphate triphosphohydrolase-like protein (443 aa).

In terms of domain architecture, HD spans 61–246; sequence RLTHSLEVAC…MEAADDICYG (186 aa).

This sequence belongs to the dGTPase family. Type 3 subfamily.

This chain is Deoxyguanosinetriphosphate triphosphohydrolase-like protein, found in Pseudomonas aeruginosa (strain LESB58).